A 642-amino-acid polypeptide reads, in one-letter code: Rhotekin-2 (642 aa).

Residues 30 to 105 (IKRKKIRESM…AQKRTGHQDF (76 aa)) form the REM-1 domain. A PH domain is found at 306–413 (LDMMSGFLSQ…WLDSLWQHIY (108 aa)). Disordered stretches follow at residues 505 to 563 (TVLS…GRPS) and 575 to 642 (LQKS…PKAW). 2 stretches are compositionally biased toward basic and acidic residues: residues 597–615 (PEKR…KEYI) and 632–642 (SFREKMNPKAW).

The polypeptide is Rhotekin-2 (rtkn2) (Danio rerio (Zebrafish)).